The following is a 611-amino-acid chain: MAU2 chromatid cohesion factor homolog (611 aa).

TPR repeat units lie at residues 11 to 46 (YAGL…NPPP), 91 to 124 (FEAS…TSGE), 131 to 164 (FRLF…AEQC), 371 to 404 (PILH…ADNP), and 490 to 523 (ACSL…SGKI). Residues 581–611 (WTGAVSPTKSSTIPPQQSFQTWSQPGPSRLS) are disordered. A compositionally biased stretch (polar residues) spans 585–611 (VSPTKSSTIPPQQSFQTWSQPGPSRLS).

It belongs to the SCC4/mau-2 family. In terms of assembly, component of the cohesin loading complex.

The protein localises to the nucleus. It localises to the nucleoplasm. In terms of biological role, required for association of the cohesin complex with chromatin during interphase. Plays a role in sister chromatid cohesion and normal progression through prometaphase. The protein is MAU2 chromatid cohesion factor homolog of Nematostella vectensis (Starlet sea anemone).